Consider the following 762-residue polypeptide: Palmitoyltransferase ZDHHC8 (762 aa).

At 1–13 (MPRSPGTRLKPAK) the chain is on the cytoplasmic side. The chain crosses the membrane as a helical span at residues 14-34 (YIPVATAAALLVGSSTLFFVF). Residues 35-52 (TCPWLTRAVSPAIPVYNG) are Lumenal-facing. Residues 53–73 (ILFLFVLANFSMATFMDPGVF) form a helical membrane-spanning segment. At 74-148 (PRADEDEDKE…NCIGRRNYRY (75 aa)) the chain is on the cytoplasmic side. In terms of domain architecture, DHHC spans 104–154 (KWCATCHFYRPPRCSHCSVCDNCVEDFDHHCPWVNNCIGRRNYRYFFLFLL). The S-palmitoyl cysteine intermediate role is filled by cysteine 134. The chain crosses the membrane as a helical span at residues 149–169 (FFLFLLSLSAHMVGVVAFGLL). Residues 170-190 (YVLNHSEGLGAAHTTITMAVM) lie on the Lumenal side of the membrane. A helical transmembrane segment spans residues 191–211 (CVAGLFFIPVIGLTGFHVVLV). The Cytoplasmic portion of the chain corresponds to 212 to 762 (TRGRTTNEQV…VGGTTYEISV (551 aa)). Disordered stretches follow at residues 289-350 (GLKA…PPTP), 362-423 (GPKT…TTDA), 436-537 (ASRR…SPVR), and 551-574 (ERKD…GDSG). Position 335 is a phosphoserine (serine 335). Pro residues predominate over residues 408 to 417 (LRPPYPPSPP). Arginine 439 carries the omega-N-methylarginine modification. The span at 471–485 (RNGSLSYDSLLNPGS) shows a compositional bias: polar residues. The span at 511–521 (PSDPPRPPPRS) shows a compositional bias: pro residues. Over residues 551 to 562 (ERKDREERERLL) the composition is skewed to basic and acidic residues. Residues serine 603 and serine 624 each carry the phosphoserine modification. The segment covering 626 to 644 (SSLSSSMSRAPRTSSSSLQ) has biased composition (low complexity). Disordered regions lie at residues 626-684 (SSLS…SYTG) and 707-744 (DHPQ…PARH). Residues serine 672, serine 679, serine 722, and serine 740 each carry the phosphoserine modification.

It belongs to the DHHC palmitoyltransferase family. ERF2/ZDHHC9 subfamily. Expressed in brain cortex and hippocampus.

The protein resides in the golgi apparatus membrane. Its subcellular location is the mitochondrion membrane. It carries out the reaction L-cysteinyl-[protein] + hexadecanoyl-CoA = S-hexadecanoyl-L-cysteinyl-[protein] + CoA. In terms of biological role, palmitoyltransferase that catalyzes the addition of palmitate onto various protein substrates and therefore functions in several unrelated biological processes. Through the palmitoylation of ABCA1 regulates the localization of the transporter to the plasma membrane and thereby regulates its function in cholesterol and phospholipid efflux. Could also pamitoylate the D(2) dopamine receptor DRD2 and regulate its stability and localization to the plasma membrane. Could also play a role in glutamatergic transmission. The protein is Palmitoyltransferase ZDHHC8 of Mus musculus (Mouse).